A 172-amino-acid polypeptide reads, in one-letter code: Shikimate kinase (172 aa).

14–19 (GAGKST) is a binding site for ATP. Serine 18 is a Mg(2+) binding site. Substrate-binding residues include aspartate 36, arginine 60, and glycine 82. Arginine 120 contributes to the ATP binding site. Substrate is bound at residue arginine 140. Residue glutamine 157 participates in ATP binding.

Belongs to the shikimate kinase family. Monomer. It depends on Mg(2+) as a cofactor.

It localises to the cytoplasm. The enzyme catalyses shikimate + ATP = 3-phosphoshikimate + ADP + H(+). It participates in metabolic intermediate biosynthesis; chorismate biosynthesis; chorismate from D-erythrose 4-phosphate and phosphoenolpyruvate: step 5/7. Its function is as follows. Catalyzes the specific phosphorylation of the 3-hydroxyl group of shikimic acid using ATP as a cosubstrate. The polypeptide is Shikimate kinase (Pseudoalteromonas translucida (strain TAC 125)).